A 72-amino-acid chain; its full sequence is MAAKIKKGALVRVVKEKLENSLEAKASDSRFPSYLFDSKGEIIEMNDEYALIRFYVPTPSVWLRLDQLEAVE.

The protein belongs to the complex I NdhO subunit family. In terms of assembly, NDH-1 can be composed of about 15 different subunits; different subcomplexes with different compositions have been identified which probably have different functions.

The protein localises to the cellular thylakoid membrane. The enzyme catalyses a plastoquinone + NADH + (n+1) H(+)(in) = a plastoquinol + NAD(+) + n H(+)(out). The catalysed reaction is a plastoquinone + NADPH + (n+1) H(+)(in) = a plastoquinol + NADP(+) + n H(+)(out). Functionally, NDH-1 shuttles electrons from an unknown electron donor, via FMN and iron-sulfur (Fe-S) centers, to quinones in the respiratory and/or the photosynthetic chain. The immediate electron acceptor for the enzyme in this species is believed to be plastoquinone. Couples the redox reaction to proton translocation, and thus conserves the redox energy in a proton gradient. Cyanobacterial NDH-1 also plays a role in inorganic carbon-concentration. The protein is NAD(P)H-quinone oxidoreductase subunit O of Crocosphaera subtropica (strain ATCC 51142 / BH68) (Cyanothece sp. (strain ATCC 51142)).